A 142-amino-acid chain; its full sequence is MSRGAKPPSQRQLRVGEELRHAIAMVIERGEFRDPDLLGRAITVTEVRVSPDLRNATVFVVPLGGGDVAPILAGLKRAKAFLRHEISRMVELRAVPDLWFQEDTTFDTASRIDSILNSPEVRRDIDHAPAEDEFPTDGDDGQ.

Over residues 120–130 the composition is skewed to basic and acidic residues; sequence EVRRDIDHAPA. A disordered region spans residues 120–142; the sequence is EVRRDIDHAPAEDEFPTDGDDGQ. Over residues 131–142 the composition is skewed to acidic residues; sequence EDEFPTDGDDGQ.

Belongs to the RbfA family. Monomer. Binds 30S ribosomal subunits, but not 50S ribosomal subunits or 70S ribosomes.

Its subcellular location is the cytoplasm. One of several proteins that assist in the late maturation steps of the functional core of the 30S ribosomal subunit. Associates with free 30S ribosomal subunits (but not with 30S subunits that are part of 70S ribosomes or polysomes). Required for efficient processing of 16S rRNA. May interact with the 5'-terminal helix region of 16S rRNA. The protein is Ribosome-binding factor A of Paramagnetospirillum magneticum (strain ATCC 700264 / AMB-1) (Magnetospirillum magneticum).